A 433-amino-acid polypeptide reads, in one-letter code: WD repeat domain phosphoinositide-interacting protein 1 (433 aa).

The Nuclear receptor interaction motif lies at 127 to 132; it reads LLKTLL. 2 WD repeats span residues 136 to 177 and 180 to 220; these read RNPH…CECT and AHDS…KLYE. The L/FRRG motif signature appears at 221–224; that stretch reads FRRG. WD repeat units lie at residues 226–265 and 296–346; these read KRYV…ERSE and DRAF…GGEC.

The protein belongs to the WD repeat PROPPIN family.

It localises to the golgi apparatus. The protein localises to the trans-Golgi network. Its subcellular location is the endosome. The protein resides in the cytoplasmic vesicle. It is found in the clathrin-coated vesicle. It localises to the preautophagosomal structure membrane. The protein localises to the cytoplasm. Its subcellular location is the cytoskeleton. Functionally, component of the autophagy machinery that controls the major intracellular degradation process by which cytoplasmic materials are packaged into autophagosomes and delivered to lysosomes for degradation. Plays an important role in starvation- and calcium-mediated autophagy, as well as in mitophagy. Functions downstream of the ulk1 and PI3-kinases that produce phosphatidylinositol 3-phosphate (PtdIns3P) on membranes of the endoplasmic reticulum once activated. Binds phosphatidylinositol 3-phosphate (PtdIns3P), and maybe other phosphoinositides including PtdIns3,5P2 and PtdIns5P, and is recruited to phagophore assembly sites at the endoplasmic reticulum membranes. There, it assists wipi2 in the recruitment of atg12-atg5-atg16l1, a complex that directly controls the elongation of the nascent autophagosomal membrane. Together with wdr45/wipi4, promotes atg2 (atg2a or atg2b)-mediated lipid transfer by enhancing atg2-association with phosphatidylinositol 3-monophosphate (PI3P)-containing membranes. The chain is WD repeat domain phosphoinositide-interacting protein 1 (wipi1) from Xenopus laevis (African clawed frog).